The sequence spans 161 residues: Nucleotide-binding protein Veis_3464 (161 aa).

Belongs to the YajQ family.

Functionally, nucleotide-binding protein. The protein is Nucleotide-binding protein Veis_3464 of Verminephrobacter eiseniae (strain EF01-2).